A 96-amino-acid chain; its full sequence is Co-chaperonin GroES (96 aa).

It belongs to the GroES chaperonin family. Heptamer of 7 subunits arranged in a ring. Interacts with the chaperonin GroEL.

It is found in the cytoplasm. In terms of biological role, together with the chaperonin GroEL, plays an essential role in assisting protein folding. The GroEL-GroES system forms a nano-cage that allows encapsulation of the non-native substrate proteins and provides a physical environment optimized to promote and accelerate protein folding. GroES binds to the apical surface of the GroEL ring, thereby capping the opening of the GroEL channel. The polypeptide is Co-chaperonin GroES (Methylobacterium radiotolerans (strain ATCC 27329 / DSM 1819 / JCM 2831 / NBRC 15690 / NCIMB 10815 / 0-1)).